The following is a 243-amino-acid chain: Ubiquinone/menaquinone biosynthesis C-methyltransferase UbiE (243 aa).

S-adenosyl-L-methionine is bound by residues Thr-69, Asp-90, and 116-117; that span reads DA.

It belongs to the class I-like SAM-binding methyltransferase superfamily. MenG/UbiE family.

The catalysed reaction is a 2-demethylmenaquinol + S-adenosyl-L-methionine = a menaquinol + S-adenosyl-L-homocysteine + H(+). It carries out the reaction a 2-methoxy-6-(all-trans-polyprenyl)benzene-1,4-diol + S-adenosyl-L-methionine = a 5-methoxy-2-methyl-3-(all-trans-polyprenyl)benzene-1,4-diol + S-adenosyl-L-homocysteine + H(+). The protein operates within quinol/quinone metabolism; menaquinone biosynthesis; menaquinol from 1,4-dihydroxy-2-naphthoate: step 2/2. It participates in cofactor biosynthesis; ubiquinone biosynthesis. In terms of biological role, methyltransferase required for the conversion of demethylmenaquinol (DMKH2) to menaquinol (MKH2) and the conversion of 2-polyprenyl-6-methoxy-1,4-benzoquinol (DDMQH2) to 2-polyprenyl-3-methyl-6-methoxy-1,4-benzoquinol (DMQH2). The polypeptide is Ubiquinone/menaquinone biosynthesis C-methyltransferase UbiE (Cupriavidus metallidurans (strain ATCC 43123 / DSM 2839 / NBRC 102507 / CH34) (Ralstonia metallidurans)).